The primary structure comprises 326 residues: Probable iron chelatin transport system permease protein HP_0889 (326 aa).

10 helical membrane passes run 7–27, 64–84, 91–111, 113–133, 142–162, 164–184, 187–207, 241–261, 275–295, and 301–321; these read IALA…ESLS, ILAL…QTIF, PFLL…IAVV, SNIA…VLAM, LSLV…AGAI, FFVI…SLSL, YKDC…LFLL, VASA…LVIP, LLLS…VVAK, and DLPV…WLLF.

Belongs to the binding-protein-dependent transport system permease family. FecCD subfamily.

The protein resides in the cell inner membrane. In terms of biological role, part of a binding-protein-dependent transport system for an iron chelatin; probably responsible for the translocation of the substrate across the membrane. This is Probable iron chelatin transport system permease protein HP_0889 from Helicobacter pylori (strain ATCC 700392 / 26695) (Campylobacter pylori).